A 524-amino-acid chain; its full sequence is MATRLEEVTRGRGGGTEEASEGGRGGRRRSPPQKFEIGTMEEARICGLGVKADMVCNSQANDILQHQDPSCGGTTKKHSLEGDEGSDFITKNRNLVSSVFCTQEKREEIPGREARTGPPDGQQDSECSRNKEKTLGKEVLLLMQALNTLSTPEEKLAALCKKYADLLEESRNVQKQMKILQKKQAQIVKEKVHLQSEHSKAILARSKLESLCRELQRHNKTLKEENMQQAREEEERRKEATAHFQITLNEIQAQLEQHDIHNAKLRQENIELGEKLKKLIEQYALREEHIDKVFKHKELQQQLVDAKLQQTTQLIKEADEKHQREREFLLKEATESRHKYEQMKQQEVQLKQQLSLYMDKFEEFQTTMAKSNELFTTFRQEMEKMTKKIKKLEKETIIWRTKWENNNKALLQMAEEKTVRDKEYKAFQIKLERLEKLCRALQTERNELNEKVEVLKEQVSIKAADGDLVSPATQPCAVLDSFKETSRRTLGMHLEARAKSVCEKSAAQKPSSSGSPAQGIESVD.

The span at 1-10 shows a compositional bias: basic and acidic residues; sequence MATRLEEVTR. Disordered regions lie at residues 1 to 37 and 64 to 86; these read MATRLEEVTRGRGGGTEEASEGGRGGRRRSPPQKFEI and LQHQDPSCGGTTKKHSLEGDEGS. Arg-12 and Arg-24 each carry omega-N-methylarginine. A phosphoserine mark is found at Ser-79, Ser-86, and Ser-97. Over residues 106-115 the composition is skewed to basic and acidic residues; the sequence is REEIPGREAR. The disordered stretch occupies residues 106-130; sequence REEIPGREARTGPPDGQQDSECSRN. The stretch at 153-465 forms a coiled coil; it reads EEKLAALCKK…KEQVSIKAAD (313 aa). Tyr-283 is subject to Phosphotyrosine. A disordered region spans residues 501 to 524; the sequence is VCEKSAAQKPSSSGSPAQGIESVD. Residue Ser-512 is modified to Phosphoserine.

The protein belongs to the taxilin family. Binds to the C-terminal coiled coil region of syntaxin family members STX1A, STX3A and STX4A. Forms a heterodimer with ATF4 in osteoblasts.

The protein resides in the nucleus membrane. It is found in the cytoplasm. Its subcellular location is the cytosol. May be involved in intracellular vesicle traffic. Inhibits ATF4-mediated transcription, possibly by dimerizing with ATF4 to form inactive dimers that cannot bind DNA. May be involved in regulating bone mass density through an ATF4-dependent pathway. May be involved in cell cycle progression. This is Gamma-taxilin (Txlng) from Mus musculus (Mouse).